We begin with the raw amino-acid sequence, 165 residues long: CDP-archaeol synthase (165 aa).

4 helical membrane-spanning segments follow: residues 41 to 61 (GLIC…WLVG), 72 to 92 (ILSV…KSFI), 103 to 123 (AWPV…TIIF), and 127 to 147 (WFFA…TPVL).

The protein belongs to the CDP-archaeol synthase family. Mg(2+) is required as a cofactor.

The protein localises to the cell membrane. It catalyses the reaction 2,3-bis-O-(geranylgeranyl)-sn-glycerol 1-phosphate + CTP + H(+) = CDP-2,3-bis-O-(geranylgeranyl)-sn-glycerol + diphosphate. The protein operates within membrane lipid metabolism; glycerophospholipid metabolism. Its function is as follows. Catalyzes the formation of CDP-2,3-bis-(O-geranylgeranyl)-sn-glycerol (CDP-archaeol) from 2,3-bis-(O-geranylgeranyl)-sn-glycerol 1-phosphate (DGGGP) and CTP. This reaction is the third ether-bond-formation step in the biosynthesis of archaeal membrane lipids. In Methanoregula boonei (strain DSM 21154 / JCM 14090 / 6A8), this protein is CDP-archaeol synthase.